The primary structure comprises 156 residues: MNFNATLIGQTVAFIIFVWFCMKFVWPPLMNAIEERQKRIADGLADADRAVKDLELAQAKATDQLKEAKVTANEIIEQANKRKAQIVEEAKTEADAERAKIIAQGKAEIEAERNRVKEDLRKQVATLAIMGAEKILERSIDPAAHSDIVNKLVAEI.

The helical transmembrane segment at 7 to 27 (LIGQTVAFIIFVWFCMKFVWP) threads the bilayer.

It belongs to the ATPase B chain family. F-type ATPases have 2 components, F(1) - the catalytic core - and F(0) - the membrane proton channel. F(1) has five subunits: alpha(3), beta(3), gamma(1), delta(1), epsilon(1). F(0) has three main subunits: a(1), b(2) and c(10-14). The alpha and beta chains form an alternating ring which encloses part of the gamma chain. F(1) is attached to F(0) by a central stalk formed by the gamma and epsilon chains, while a peripheral stalk is formed by the delta and b chains.

It is found in the cell inner membrane. Functionally, f(1)F(0) ATP synthase produces ATP from ADP in the presence of a proton or sodium gradient. F-type ATPases consist of two structural domains, F(1) containing the extramembraneous catalytic core and F(0) containing the membrane proton channel, linked together by a central stalk and a peripheral stalk. During catalysis, ATP synthesis in the catalytic domain of F(1) is coupled via a rotary mechanism of the central stalk subunits to proton translocation. In terms of biological role, component of the F(0) channel, it forms part of the peripheral stalk, linking F(1) to F(0). In Shewanella baltica (strain OS185), this protein is ATP synthase subunit b.